Here is a 165-residue protein sequence, read N- to C-terminus: Nucleotide-binding protein MXAN_1478 (165 aa).

The protein belongs to the YajQ family.

Nucleotide-binding protein. In Myxococcus xanthus (strain DK1622), this protein is Nucleotide-binding protein MXAN_1478.